Here is a 246-residue protein sequence, read N- to C-terminus: Biosynthetic peptidoglycan transglycosylase (246 aa).

A helical membrane pass occupies residues 27 to 47 (VVFCFFFAVFALLLIFRFVPI).

This sequence belongs to the glycosyltransferase 51 family.

It localises to the cell inner membrane. The catalysed reaction is [GlcNAc-(1-&gt;4)-Mur2Ac(oyl-L-Ala-gamma-D-Glu-L-Lys-D-Ala-D-Ala)](n)-di-trans,octa-cis-undecaprenyl diphosphate + beta-D-GlcNAc-(1-&gt;4)-Mur2Ac(oyl-L-Ala-gamma-D-Glu-L-Lys-D-Ala-D-Ala)-di-trans,octa-cis-undecaprenyl diphosphate = [GlcNAc-(1-&gt;4)-Mur2Ac(oyl-L-Ala-gamma-D-Glu-L-Lys-D-Ala-D-Ala)](n+1)-di-trans,octa-cis-undecaprenyl diphosphate + di-trans,octa-cis-undecaprenyl diphosphate + H(+). It participates in cell wall biogenesis; peptidoglycan biosynthesis. In terms of biological role, peptidoglycan polymerase that catalyzes glycan chain elongation from lipid-linked precursors. This Haemophilus influenzae (strain ATCC 51907 / DSM 11121 / KW20 / Rd) protein is Biosynthetic peptidoglycan transglycosylase.